The following is a 425-amino-acid chain: UDP-N-acetylglucosamine 1-carboxyvinyltransferase (425 aa).

22 to 23 (KN) is a phosphoenolpyruvate binding site. Residue Arg-93 participates in UDP-N-acetyl-alpha-D-glucosamine binding. Asp-117 functions as the Proton donor in the catalytic mechanism. Positions 312 and 334 each coordinate UDP-N-acetyl-alpha-D-glucosamine.

Belongs to the EPSP synthase family. MurA subfamily.

The protein localises to the cytoplasm. The enzyme catalyses phosphoenolpyruvate + UDP-N-acetyl-alpha-D-glucosamine = UDP-N-acetyl-3-O-(1-carboxyvinyl)-alpha-D-glucosamine + phosphate. The protein operates within cell wall biogenesis; peptidoglycan biosynthesis. Functionally, cell wall formation. Adds enolpyruvyl to UDP-N-acetylglucosamine. This chain is UDP-N-acetylglucosamine 1-carboxyvinyltransferase, found in Treponema pallidum (strain Nichols).